Consider the following 349-residue polypeptide: Ribosomal RNA small subunit methyltransferase C (349 aa).

This sequence belongs to the methyltransferase superfamily. RsmC family. In terms of assembly, monomer.

The protein resides in the cytoplasm. The enzyme catalyses guanosine(1207) in 16S rRNA + S-adenosyl-L-methionine = N(2)-methylguanosine(1207) in 16S rRNA + S-adenosyl-L-homocysteine + H(+). Specifically methylates the guanine in position 1207 of 16S rRNA in the 30S particle. The chain is Ribosomal RNA small subunit methyltransferase C from Psychromonas ingrahamii (strain DSM 17664 / CCUG 51855 / 37).